The primary structure comprises 425 residues: Serine--tRNA ligase (425 aa).

Position 233–235 (233–235) interacts with L-serine; that stretch reads TAE. 264–266 contacts ATP; it reads RRE. Residue glutamate 287 participates in L-serine binding. 351-354 lines the ATP pocket; that stretch reads EISS. L-serine is bound at residue serine 385.

It belongs to the class-II aminoacyl-tRNA synthetase family. Type-1 seryl-tRNA synthetase subfamily. In terms of assembly, homodimer. The tRNA molecule binds across the dimer.

The protein resides in the cytoplasm. It catalyses the reaction tRNA(Ser) + L-serine + ATP = L-seryl-tRNA(Ser) + AMP + diphosphate + H(+). The enzyme catalyses tRNA(Sec) + L-serine + ATP = L-seryl-tRNA(Sec) + AMP + diphosphate + H(+). It functions in the pathway aminoacyl-tRNA biosynthesis; selenocysteinyl-tRNA(Sec) biosynthesis; L-seryl-tRNA(Sec) from L-serine and tRNA(Sec): step 1/1. Its function is as follows. Catalyzes the attachment of serine to tRNA(Ser). Is also able to aminoacylate tRNA(Sec) with serine, to form the misacylated tRNA L-seryl-tRNA(Sec), which will be further converted into selenocysteinyl-tRNA(Sec). The chain is Serine--tRNA ligase from Synechococcus sp. (strain CC9605).